Here is a 590-residue protein sequence, read N- to C-terminus: Arginine--tRNA ligase (590 aa).

The 'HIGH' region signature appears at 130 to 140; the sequence is PNIAKEMHVGH.

The protein belongs to the class-I aminoacyl-tRNA synthetase family. As to quaternary structure, monomer.

The protein resides in the cytoplasm. The catalysed reaction is tRNA(Arg) + L-arginine + ATP = L-arginyl-tRNA(Arg) + AMP + diphosphate. The protein is Arginine--tRNA ligase of Synechococcus sp. (strain CC9311).